Here is a 283-residue protein sequence, read N- to C-terminus: Protease HtpX homolog (283 aa).

A run of 2 helical transmembrane segments spans residues 7-27 (TAVLMAAITALFMAIGSVLGG) and 29-49 (QGMAIALVVALGMNFFSYWFS). Residue His131 participates in Zn(2+) binding. Glu132 is an active-site residue. Residue His135 coordinates Zn(2+). Transmembrane regions (helical) follow at residues 146–166 (ISATMAGAISMLANFAMFFGG) and 177–197 (IAGILVMLLAPLAASLIQMAI). Zn(2+) is bound at residue Glu202.

Belongs to the peptidase M48B family. Zn(2+) serves as cofactor.

The protein resides in the cell inner membrane. This is Protease HtpX homolog from Methylibium petroleiphilum (strain ATCC BAA-1232 / LMG 22953 / PM1).